Here is a 313-residue protein sequence, read N- to C-terminus: Ribosomal RNA small subunit methyltransferase H (313 aa).

S-adenosyl-L-methionine-binding positions include 35–37 (GGH), aspartate 55, phenylalanine 79, aspartate 101, and glutamine 108.

The protein belongs to the methyltransferase superfamily. RsmH family.

Its subcellular location is the cytoplasm. It carries out the reaction cytidine(1402) in 16S rRNA + S-adenosyl-L-methionine = N(4)-methylcytidine(1402) in 16S rRNA + S-adenosyl-L-homocysteine + H(+). In terms of biological role, specifically methylates the N4 position of cytidine in position 1402 (C1402) of 16S rRNA. The chain is Ribosomal RNA small subunit methyltransferase H from Salmonella typhi.